Here is a 957-residue protein sequence, read N- to C-terminus: Melanoma-associated antigen E1 (957 aa).

A disordered region spans residues Met-1 to Leu-433. Polar residues-rich tracts occupy residues Ser-85–Val-96 and Leu-104–Leu-130. The segment covering Thr-138 to Pro-156 has biased composition (low complexity). 6 stretches are compositionally biased toward polar residues: residues Glu-158–Val-177, Leu-220–Leu-232, Arg-256–Thr-306, Leu-328–Val-344, Arg-364–Val-380, and Thr-414–Lys-428. MAGE domains lie at Met-491–Ala-690 and Leu-745–Ala-936. An interaction with DTNA region spans residues Ser-743 to Arg-957.

Interacts with DTNA. Interacts with TRIM28.

The protein resides in the cytoplasm. Its subcellular location is the perinuclear region. It is found in the nucleus. The protein localises to the cell membrane. Functionally, may enhance ubiquitin ligase activity of RING-type zinc finger-containing E3 ubiquitin-protein ligases. Proposed to act through recruitment and/or stabilization of the Ubl-conjugating enzyme (E2) at the E3:substrate complex. The protein is Melanoma-associated antigen E1 (MAGEE1) of Macaca fascicularis (Crab-eating macaque).